A 133-amino-acid chain; its full sequence is Histone H2A (133 aa).

The segment covering 1–10 has biased composition (gly residues); it reads MTGGKSGGKA. The disordered stretch occupies residues 1–25; that stretch reads MTGGKSGGKASGSKSSQSRSSKAGL. N6-acetyllysine is present on residues Lys5 and Lys9. A compositionally biased stretch (low complexity) spans 11–24; sequence SGSKSSQSRSSKAG. Gln106 carries the post-translational modification N5-methylglutamine. Residue Ser130 is modified to Phosphoserine. The [ST]-Q motif signature appears at 130 to 131; the sequence is SQ.

The protein belongs to the histone H2A family. In terms of assembly, the nucleosome is a histone octamer containing two molecules each of H2A, H2B, H3 and H4 assembled in one H3-H4 heterotetramer and two H2A-H2B heterodimers. The octamer wraps approximately 147 bp of DNA. In terms of processing, phosphorylated to form H2AS128ph (gamma-H2A) in response to DNA double-strand breaks (DSBs) generated by exogenous genotoxic agents and by stalled replication forks. Phosphorylation is dependent on the DNA damage checkpoint kinases MEC1/ATR and TEL1/ATM, spreads on either side of a detected DSB site and may mark the surrounding chromatin for recruitment of proteins required for DNA damage signaling and repair. Gamma-H2A is removed from the DNA prior to the strand invasion-primer extension step of the repair process and subsequently dephosphorylated. Dephosphorylation is necessary for efficient recovery from the DNA damage checkpoint. Post-translationally, acetylated by ESA1 to form H2AK4ac and H2AK7ac.

It is found in the nucleus. The protein resides in the chromosome. In terms of biological role, core component of nucleosome which plays a central role in DNA double strand break (DSB) repair. Nucleosomes wrap and compact DNA into chromatin, limiting DNA accessibility to the cellular machineries which require DNA as a template. Histones thereby play a central role in transcription regulation, DNA repair, DNA replication and chromosomal stability. DNA accessibility is regulated via a complex set of post-translational modifications of histones, also called histone code, and nucleosome remodeling. The polypeptide is Histone H2A (HTA1) (Coccidioides immitis (strain RS) (Valley fever fungus)).